Consider the following 173-residue polypeptide: Shikimate kinase 1 (173 aa).

14–19 provides a ligand contact to ATP; the sequence is GAGKST. Ser-18 provides a ligand contact to Mg(2+). Substrate is bound by residues Asp-36, Arg-60, and Gly-82. Arg-120 is a binding site for ATP. Arg-140 is a binding site for substrate. Gln-157 is a binding site for ATP.

Belongs to the shikimate kinase family. Monomer. Requires Mg(2+) as cofactor.

It localises to the cytoplasm. The catalysed reaction is shikimate + ATP = 3-phosphoshikimate + ADP + H(+). It functions in the pathway metabolic intermediate biosynthesis; chorismate biosynthesis; chorismate from D-erythrose 4-phosphate and phosphoenolpyruvate: step 5/7. Functionally, catalyzes the specific phosphorylation of the 3-hydroxyl group of shikimic acid using ATP as a cosubstrate. The chain is Shikimate kinase 1 from Enterobacter sp. (strain 638).